Consider the following 917-residue polypeptide: Hexokinase-1 (917 aa).

Residue methionine 1 is modified to N-acetylmethionine. The mitochondrial-binding peptide (MBP) stretch occupies residues 1–10; that stretch reads MIAAQLLAYY. Hexokinase domains follow at residues 16–458 and 464–906; these read DDQV…MVTA and AEQH…LITA. Residues arginine 30 and 84–89 contribute to the ATP site; that span reads DLGGSS. The hexokinase small subdomain 1 stretch occupies residues 73–207; sequence DGSEKGDFIA…DYDANIVAVV (135 aa). 84–91 is a D-glucose 6-phosphate binding site; the sequence is DLGGSSFR. Residues serine 155, 172 to 173, and 208 to 209 each bind D-glucose; these read TK and ND. The interval 208–447 is hexokinase large subdomain 1; it reads NDTVGTMMTC…SDVRFLLSES (240 aa). 2 residues coordinate D-glucose 6-phosphate: aspartate 209 and threonine 232. D-glucose is bound by residues asparagine 235, glutamate 260, and 291–294; that span reads QLFE. A Phosphoserine modification is found at serine 337. Position 345 (asparagine 345) interacts with ATP. A D-glucose 6-phosphate-binding site is contributed by 413–415; it reads DGS. 425-426 is an ATP binding site; that stretch reads RR. D-glucose 6-phosphate is bound by residues serine 449 and 532 to 536; that span reads DLGGT. The hexokinase small subdomain 2 stretch occupies residues 521–655; the sequence is DGTENGDFLA…EFDLDVVAVV (135 aa). 532 to 537 is an ATP binding site; the sequence is DLGGTN. Residues 603 to 604, 620 to 621, and 656 to 657 each bind D-glucose; these read SF, TK, and ND. Residues 656–895 are hexokinase large subdomain 2; the sequence is NDTVGTMMTC…CNVSFLLSED (240 aa). Residues aspartate 657 and threonine 680 each coordinate D-glucose 6-phosphate. Threonine 680 serves as a coordination point for ATP. D-glucose-binding positions include 682-683, glutamate 708, and glutamate 742; that span reads SN. ATP is bound by residues 747-748, 784-788, and 863-867; these read GM, TKFLS, and TLYKL. D-glucose 6-phosphate-binding positions include 861-863 and serine 897; that span reads DGT.

Belongs to the hexokinase family. Monomer. Interacts with RABL2/RABL2A; binds preferentially to GTP-bound RABL2. Interacts with VDAC1. The HK1-VDAC1 complex interacts with ATF2. Interacts (via N-terminal spermatogenic cell-specific region) with PFKM (via C-terminus). Interacts with SMAD5.

It localises to the mitochondrion outer membrane. It is found in the cytoplasm. Its subcellular location is the cytosol. The enzyme catalyses a D-hexose + ATP = a D-hexose 6-phosphate + ADP + H(+). It catalyses the reaction D-fructose + ATP = D-fructose 6-phosphate + ADP + H(+). It carries out the reaction D-glucose + ATP = D-glucose 6-phosphate + ADP + H(+). The catalysed reaction is D-mannose + ATP = D-mannose 6-phosphate + ADP + H(+). The enzyme catalyses D-glucosamine + ATP = D-glucosamine 6-phosphate + ADP + H(+). The protein operates within carbohydrate metabolism; hexose metabolism. It participates in carbohydrate degradation; glycolysis; D-glyceraldehyde 3-phosphate and glycerone phosphate from D-glucose: step 1/4. Its activity is regulated as follows. Hexokinase is an allosteric enzyme inhibited by its product D-glucose 6-phosphate. Hexokinase activity is inhibited by N-acetyl-D-glucosamine. Catalyzes the phosphorylation of various hexoses, such as D-glucose, D-glucosamine, D-fructose, D-mannose and 2-deoxy-D-glucose, to hexose 6-phosphate (D-glucose 6-phosphate, D-glucosamine 6-phosphate, D-fructose 6-phosphate, D-mannose 6-phosphate and 2-deoxy-D-glucose 6-phosphate, respectively). Does not phosphorylate N-acetyl-D-glucosamine. Mediates the initial step of glycolysis by catalyzing phosphorylation of D-glucose to D-glucose 6-phosphate. Involved in innate immunity and inflammation by acting as a pattern recognition receptor for bacterial peptidoglycan. When released in the cytosol, N-acetyl-D-glucosamine component of bacterial peptidoglycan inhibits the hexokinase activity of HK1 and causes its dissociation from mitochondrial outer membrane, thereby activating the NLRP3 inflammasome. The chain is Hexokinase-1 from Pongo abelii (Sumatran orangutan).